Consider the following 377-residue polypeptide: Probable purine permease 22 (377 aa).

10 helical membrane passes run 39–59, 71–91, 107–127, 128–148, 166–186, 202–222, 238–258, 283–303, 309–329, and 338–358; these read WLRV…ATVL, TYVV…FRFF, SPSF…VSAY, AYLS…LILA, FTPL…LLVV, VIGF…LSLI, VLDL…IGLF, TLAS…GLIF, FSNS…VIVF, and IFSI…HYLD.

The protein belongs to the purine permeases (TC 2.A.7.14) family.

Its subcellular location is the membrane. In Arabidopsis thaliana (Mouse-ear cress), this protein is Probable purine permease 22 (PUP22).